A 740-amino-acid chain; its full sequence is Ion-translocating oxidoreductase complex subunit C (740 aa).

2 4Fe-4S ferredoxin-type domains span residues G369–Y397 and K407–F436. [4Fe-4S] cluster is bound by residues C377, C380, C383, C387, C416, C419, C422, and C426. A disordered region spans residues K602–K716.

The protein belongs to the 4Fe4S bacterial-type ferredoxin family. RnfC subfamily. As to quaternary structure, the complex is composed of six subunits: RsxA, RsxB, RsxC, RsxD, RsxE and RsxG. [4Fe-4S] cluster is required as a cofactor.

The protein localises to the cell inner membrane. Part of a membrane-bound complex that couples electron transfer with translocation of ions across the membrane. Required to maintain the reduced state of SoxR. This is Ion-translocating oxidoreductase complex subunit C from Escherichia coli (strain SE11).